The primary structure comprises 367 residues: Inhibin alpha chain (367 aa).

Residues 1 to 20 (MVPPLPLLLLLLLVPQGGHG) form the signal peptide. Positions 21–63 (CQGSELDREIVLAKVRALFLDALGPPAVTGEGGDPGVRRLPRR) are excised as a propeptide. The propeptide at 64-233 (HALGGFARRG…PPSGGERTRR (170 aa)) is inhibin alpha N-terminal region. 2 N-linked (GlcNAc...) asparagine glycosylation sites follow: N147 and N269. Intrachain disulfides connect C263–C329, C292–C364, and C296–C366.

The protein belongs to the TGF-beta family. As to quaternary structure, dimeric, linked by one or more disulfide bonds. Activin B is a dimer of alpha and beta-B. Inhibin A is a dimer of alpha and beta-A. Inhibin B is a dimer of alpha and beta-B. Interacts with TGFBR3L; this interaction regulates female fertility. In terms of processing, proteolytic processing yields a number of bioactive forms, consisting either solely of the mature alpha chain, of the most N-terminal propeptide linked through a disulfide bond to the mature alpha chain, or of the entire proprotein.

It localises to the secreted. Functionally, inhibins and activins inhibit and activate, respectively, the secretion of follitropin by the pituitary gland. Inhibins/activins are involved in regulating a number of diverse functions such as hypothalamic and pituitary hormone secretion, gonadal hormone secretion, germ cell development and maturation, erythroid differentiation, insulin secretion, nerve cell survival, embryonic axial development or bone growth, depending on their subunit composition. Inhibins appear to oppose the functions of activins. In terms of biological role, inhibin A is a dimer of alpha/INHA and beta-A/INHBA that functions as a feedback regulator in the hypothalamic-pituitary-gonadal (HPG) axis. Inhibits the secretion of FSH from the anterior pituitary gland by acting on pituitary gonadotrope cells. Antagonizes activin A by binding to the proteoglycan, betaglycan, and forming a stable complex with and, thereby, sequestering type II activin receptors while excluding type I receptor. Inhibin B is a dimer of alpha and beta-B that plays a crucial role in the regulation of the reproductive system by inhibiting the secretion of follicle-stimulating hormone (FSH) from the anterior pituitary gland. Thereby, maintains reproductive homeostasis in both males and females. Acts as a more potent suppressor of FSH release than inhibin A. Functions as competitive receptor antagonist binding activin type II receptors with high affinity in the presence of the TGF-beta type III coreceptor/TGFBR3L. The polypeptide is Inhibin alpha chain (INHA) (Equus caballus (Horse)).